Here is a 271-residue protein sequence, read N- to C-terminus: Shikimate dehydrogenase (NADP(+)) (271 aa).

Shikimate-binding positions include 14–16 (SKS) and Thr61. Lys65 functions as the Proton acceptor in the catalytic mechanism. Asn86 and Asp102 together coordinate shikimate. Residues 126–130 (GAGGA), 149–154 (NRTFSR), and Met213 contribute to the NADP(+) site. Tyr215 is a shikimate binding site. Gly238 serves as a coordination point for NADP(+).

It belongs to the shikimate dehydrogenase family. Homodimer.

It carries out the reaction shikimate + NADP(+) = 3-dehydroshikimate + NADPH + H(+). Its pathway is metabolic intermediate biosynthesis; chorismate biosynthesis; chorismate from D-erythrose 4-phosphate and phosphoenolpyruvate: step 4/7. Functionally, involved in the biosynthesis of the chorismate, which leads to the biosynthesis of aromatic amino acids. Catalyzes the reversible NADPH linked reduction of 3-dehydroshikimate (DHSA) to yield shikimate (SA). The chain is Shikimate dehydrogenase (NADP(+)) from Histophilus somni (strain 2336) (Haemophilus somnus).